Reading from the N-terminus, the 128-residue chain is Large ribosomal subunit protein bL17 (128 aa).

Belongs to the bacterial ribosomal protein bL17 family. Part of the 50S ribosomal subunit. Contacts protein L32.

The chain is Large ribosomal subunit protein bL17 from Glaesserella parasuis serovar 5 (strain SH0165) (Haemophilus parasuis).